Consider the following 67-residue polypeptide: MLKMEVVLFTFLVLFPLSTLQLETDQPVERYVENKQDLNPDESRNFMLPIVKKCCTACRMPPCKCCA.

The N-terminal stretch at 1 to 24 (MLKMEVVLFTFLVLFPLSTLQLET) is a signal peptide. The propeptide occupies 25–51 (DQPVERYVENKQDLNPDESRNFMLPIV). 3 cysteine pairs are disulfide-bonded: Cys54-Cys65, Cys55-Cys63, and Cys58-Cys66.

It belongs to the conotoxin M superfamily. In terms of tissue distribution, expressed by the venom duct.

The protein resides in the secreted. This chain is Conotoxin ArMLKM-01, found in Conus arenatus (Sand-dusted cone).